Reading from the N-terminus, the 361-residue chain is DNA replication and repair protein RecF (361 aa).

30 to 37 (GANGSGKT) is a binding site for ATP.

It belongs to the RecF family.

The protein resides in the cytoplasm. Functionally, the RecF protein is involved in DNA metabolism; it is required for DNA replication and normal SOS inducibility. RecF binds preferentially to single-stranded, linear DNA. It also seems to bind ATP. The polypeptide is DNA replication and repair protein RecF (Pectobacterium atrosepticum (strain SCRI 1043 / ATCC BAA-672) (Erwinia carotovora subsp. atroseptica)).